The primary structure comprises 127 residues: S-adenosylmethionine decarboxylase proenzyme (127 aa).

Ser-63 functions as the Schiff-base intermediate with substrate; via pyruvic acid in the catalytic mechanism. Residue Ser-63 is modified to Pyruvic acid (Ser); by autocatalysis. His-68 functions as the Proton acceptor; for processing activity in the catalytic mechanism. The Proton donor; for catalytic activity role is filled by Cys-83.

This sequence belongs to the prokaryotic AdoMetDC family. Type 1 subfamily. As to quaternary structure, heterotetramer of two alpha and two beta chains arranged as a dimer of alpha/beta heterodimers. It depends on pyruvate as a cofactor. Post-translationally, is synthesized initially as an inactive proenzyme. Formation of the active enzyme involves a self-maturation process in which the active site pyruvoyl group is generated from an internal serine residue via an autocatalytic post-translational modification. Two non-identical subunits are generated from the proenzyme in this reaction, and the pyruvate is formed at the N-terminus of the alpha chain, which is derived from the carboxyl end of the proenzyme. The post-translation cleavage follows an unusual pathway, termed non-hydrolytic serinolysis, in which the side chain hydroxyl group of the serine supplies its oxygen atom to form the C-terminus of the beta chain, while the remainder of the serine residue undergoes an oxidative deamination to produce ammonia and the pyruvoyl group blocking the N-terminus of the alpha chain.

The enzyme catalyses S-adenosyl-L-methionine + H(+) = S-adenosyl 3-(methylsulfanyl)propylamine + CO2. Its pathway is amine and polyamine biosynthesis; S-adenosylmethioninamine biosynthesis; S-adenosylmethioninamine from S-adenosyl-L-methionine: step 1/1. Functionally, catalyzes the decarboxylation of S-adenosylmethionine to S-adenosylmethioninamine (dcAdoMet), the propylamine donor required for the synthesis of the polyamines spermine and spermidine from the diamine putrescine. This is S-adenosylmethionine decarboxylase proenzyme from Carboxydothermus hydrogenoformans (strain ATCC BAA-161 / DSM 6008 / Z-2901).